The sequence spans 342 residues: Ribosomal RNA small subunit methyltransferase C (342 aa).

It belongs to the methyltransferase superfamily. RsmC family. Monomer.

The protein localises to the cytoplasm. The catalysed reaction is guanosine(1207) in 16S rRNA + S-adenosyl-L-methionine = N(2)-methylguanosine(1207) in 16S rRNA + S-adenosyl-L-homocysteine + H(+). Functionally, specifically methylates the guanine in position 1207 of 16S rRNA in the 30S particle. The chain is Ribosomal RNA small subunit methyltransferase C from Aeromonas hydrophila subsp. hydrophila (strain ATCC 7966 / DSM 30187 / BCRC 13018 / CCUG 14551 / JCM 1027 / KCTC 2358 / NCIMB 9240 / NCTC 8049).